The primary structure comprises 470 residues: MTELPDNTRWQLWIVALGFFMQSLDTTIVNTALPSMAKSLGESPLHMHMVVVSYVLTVAVMLPASGWLADKIGVRNIFFAAIVLFTLGSLFCALSGTLNQLVLARVLQGVGGAMMVPVGRLTVMKIVPRAQYMAAMTFVTLPGQIGPLLGPALGGVLVEYASWHWIFLINIPVGIVGAMATFMLMPNYTIETRRFDLPGFLLLAIGMAVLTLALDGSKSMGISPWTLAGLAAGGAAAILLYLLHAKKNSGALFSLRLFCTPTFSLGLLGSFAGRIGSGMLPFMTPVFLQIGLGFSPFHAGLMMIPMVLGSMGMKRIVVQIVNRFGYRRVLVATTLGLALVSLLFMSVALLGWYYLLPLVLLLQGMVNSARFSSMNTLTLKDLPDTLASSGNSLLSMIMQLSMSIGVTIAGMLLGMFGQQHIGIDSSATHHVFMYTWLCMAVIIALPAIIFARVPNDTQQNMVISRRKRSL.

Over 1–11 (MTELPDNTRWQ) the chain is Periplasmic. Residues 12–32 (LWIVALGFFMQSLDTTIVNTA) form a helical membrane-spanning segment. Over 33–48 (LPSMAKSLGESPLHMH) the chain is Cytoplasmic. A helical transmembrane segment spans residues 49–69 (MVVVSYVLTVAVMLPASGWLA). At 70–76 (DKIGVRN) the chain is on the periplasmic side. Residues 77-97 (IFFAAIVLFTLGSLFCALSGT) traverse the membrane as a helical segment. At 98–101 (LNQL) the chain is on the cytoplasmic side. The chain crosses the membrane as a helical span at residues 102–124 (VLARVLQGVGGAMMVPVGRLTVM). Over 125-137 (KIVPRAQYMAAMT) the chain is Periplasmic. A helical membrane pass occupies residues 138-158 (FVTLPGQIGPLLGPALGGVLV). At 159 to 164 (EYASWH) the chain is on the cytoplasmic side. Residues 165–185 (WIFLINIPVGIVGAMATFMLM) form a helical membrane-spanning segment. The Periplasmic segment spans residues 186-196 (PNYTIETRRFD). Residues 197 to 217 (LPGFLLLAIGMAVLTLALDGS) form a helical membrane-spanning segment. The Cytoplasmic segment spans residues 218-221 (KSMG). The chain crosses the membrane as a helical span at residues 222-242 (ISPWTLAGLAAGGAAAILLYL). The Periplasmic segment spans residues 243 to 262 (LHAKKNSGALFSLRLFCTPT). A helical transmembrane segment spans residues 263–283 (FSLGLLGSFAGRIGSGMLPFM). At 284–285 (TP) the chain is on the cytoplasmic side. A helical membrane pass occupies residues 286–306 (VFLQIGLGFSPFHAGLMMIPM). Over 307 to 341 (VLGSMGMKRIVVQIVNRFGYRRVLVATTLGLALVS) the chain is Periplasmic. The chain crosses the membrane as a helical span at residues 342–362 (LLFMSVALLGWYYLLPLVLLL). Over 363–395 (QGMVNSARFSSMNTLTLKDLPDTLASSGNSLLS) the chain is Cytoplasmic. A helical membrane pass occupies residues 396–416 (MIMQLSMSIGVTIAGMLLGMF). At 417–430 (GQQHIGIDSSATHH) the chain is on the periplasmic side. A helical transmembrane segment spans residues 431–451 (VFMYTWLCMAVIIALPAIIFA). Residues 452-470 (RVPNDTQQNMVISRRKRSL) are Cytoplasmic-facing.

The protein belongs to the major facilitator superfamily. TCR/Tet family.

Its subcellular location is the cell inner membrane. The chain is Putative multidrug resistance protein MdtD from Salmonella paratyphi B (strain ATCC BAA-1250 / SPB7).